Consider the following 469-residue polypeptide: MTAEQCQRCNKNAVEVISRKELFCAECFRVFVMQKQRKQMMSDDYYRDIFKVMYKDKIRSAEEAEQQNKNSTILIPLSFGSSSLMMLDIVHLTLLEQKMQHQKTGFNVDVLICYRESNDELLTNIQSNIKELSTVRYSENKDNIRFHTLCLDSMFEIDKELIDQVVLHNVEFTGRQVSINESEHANLSLQTVLTSCPNRSTKEDIIDFVTKHLVKKYAYQNGQKAILWGHSMTRLADEIISCVVKGRGAQISSKLNTTNLDVNYGSRFKNLYPLKDILLTEVDAYCALFDLSKYLIKYELQDSLLVNKLKKEKHIGNQRLAKNMTINELARKYFNDIEGEYSNVIATVLRTGDKLDEPLATLGEKHCRICKSTVHDDVSKWLRDITVNVGQPLESQLERDLHEKWATSHIGLETTAYYQLRDRVWEQGDDVDLCYGCIVTMQGVKNLNVPWPKNNEQELNEVLAEYSLE.

This sequence belongs to the CTU2/NCS2 family.

The protein resides in the cytoplasm. It participates in tRNA modification; 5-methoxycarbonylmethyl-2-thiouridine-tRNA biosynthesis. Plays a central role in 2-thiolation of mcm(5)S(2)U at tRNA wobble positions of tRNA(Lys), tRNA(Glu) and tRNA(Gln). May act by forming a heterodimer with NCS6 that ligates sulfur from thiocarboxylated URM1 onto the uridine of tRNAs at wobble position. Prior mcm(5) tRNA modification by the elongator complex is required for 2-thiolation. May also be involved in protein urmylation. The polypeptide is Cytoplasmic tRNA 2-thiolation protein 2 (Candida glabrata (strain ATCC 2001 / BCRC 20586 / JCM 3761 / NBRC 0622 / NRRL Y-65 / CBS 138) (Yeast)).